Consider the following 577-residue polypeptide: Thiol:disulfide interchange protein DsbD (577 aa).

An N-terminal signal peptide occupies residues 1 to 23 (MAQRIFTLIFLLWTAVGTPQVAA). Disulfide bonds link Cys-131/Cys-137 and Cys-194/Cys-316. Helical transmembrane passes span 182 to 202 (ALLIGIGVAFTPCVLPMYPLI), 225 to 245 (YVQGMALTYTLLGLIVAAAGL), 255 to 275 (YILIGLSVMFIALALSMFGLY), 308 to 328 (LAGLICSPCTTAPLSAILLYI), 338 to 358 (GGTLYLYALGMGLPLILVTLF), 369 to 389 (WMQYVKEAFGFIILALPVFLL), and 396 to 416 (AWGIRLWSALGIAFFGWALML). The Thioredoxin domain occupies 437 to 577 (VISAKPLQDW…FQAHLQKFSP (141 aa)). A disulfide bond links Cys-492 and Cys-495.

It belongs to the thioredoxin family. DsbD subfamily.

The protein resides in the cell inner membrane. It catalyses the reaction [protein]-dithiol + NAD(+) = [protein]-disulfide + NADH + H(+). The catalysed reaction is [protein]-dithiol + NADP(+) = [protein]-disulfide + NADPH + H(+). Functionally, required to facilitate the formation of correct disulfide bonds in some periplasmic proteins and for the assembly of the periplasmic c-type cytochromes. Acts by transferring electrons from cytoplasmic thioredoxin to the periplasm. This transfer involves a cascade of disulfide bond formation and reduction steps. The protein is Thiol:disulfide interchange protein DsbD of Pectobacterium atrosepticum (strain SCRI 1043 / ATCC BAA-672) (Erwinia carotovora subsp. atroseptica).